Consider the following 59-residue polypeptide: Pycsar effector protein MePycTM (59 aa).

The chain crosses the membrane as a helical span at residues 36–56 (VAVAIYLLGAAMLSSGAAVLA).

It is found in the cell membrane. Pycsar (pyrimidine cyclase system for antiphage resistance) provides immunity against bacteriophage. The pyrimidine cyclase (PycC) synthesizes cyclic nucleotides in response to infection; these serve as specific second messenger signals. The signals activate the adjacent effector, leading to bacterial cell death and abortive phage infection. A clade D Pycsar system. Its function is as follows. The effector gene of a two-gene Pycsar system. Expression of this and adjacent uridylate cyclase MePycC (AC A0A1C5G2V9) probably confers resistance to bacteriophage. The genes are probably only expressed in response to bacteriophage infection. Probably only responds to cUMP (produced by its cognate NTP cyclase), acts by impairing membrane integrity. In Micromonospora echinofusca, this protein is Pycsar effector protein MePycTM.